The chain runs to 381 residues: MLTLENVSKTYKGGKKAVNNVNLKIAKGEFICFIGPSGCGKTTTMKMINRLIEPSAGKIFIDGENIMDQDPVELRRKIGYVIQQIGLFPHMTIQQNISLVPKLLKWPEQQRKERARELLKLVDMGPEYVDRYPHELSGGQQQRIGVLRALAAEPPLILMDEPFGALDPITRDSLQEEFKKLQKTLHKTIVFVTHDMDEAIKLADRIVILKAGEIVQVGTPDDILRNPADEFVEEFIGKERLIQSSSPDVERVDQIMNTQPVTITADKTLSEAIQLMRQERVDSLLVVNDERVLQGYVDVEIIDQCRKKANLVSEVLHEDIYTVLGGTLLRDTVRKILKRGVKYVPVVDEDRRLIGIVTRASLVDIVYDSLWGEEKQLAALS.

The ABC transporter domain maps to 2-236; the sequence is LTLENVSKTY…PADEFVEEFI (235 aa). 35–42 serves as a coordination point for ATP; the sequence is GPSGCGKT. 2 consecutive CBS domains span residues 256–314 and 316–374; these read MNTQ…LVSE and LHED…WGEE.

It belongs to the ABC transporter superfamily.

Functionally, involved in a high affinity multicomponent binding-protein-dependent transport system for choline. Probably responsible for energy coupling to the transport system. The sequence is that of Choline transport ATP-binding protein OpuBA (opuBA) from Bacillus subtilis (strain 168).